The chain runs to 635 residues: DNA mismatch repair protein MutL (635 aa).

A disordered region spans residues 359 to 399 (GTNKYAQPEAAKSSAAEQAVARERSSARERAAPAYKEDHPY). Residues 364–377 (AQPEAAKSSAAEQA) show a composition bias toward low complexity. The span at 378-399 (VARERSSARERAAPAYKEDHPY) shows a compositional bias: basic and acidic residues.

This sequence belongs to the DNA mismatch repair MutL/HexB family.

This protein is involved in the repair of mismatches in DNA. It is required for dam-dependent methyl-directed DNA mismatch repair. May act as a 'molecular matchmaker', a protein that promotes the formation of a stable complex between two or more DNA-binding proteins in an ATP-dependent manner without itself being part of a final effector complex. In Yersinia pestis bv. Antiqua (strain Antiqua), this protein is DNA mismatch repair protein MutL.